Consider the following 171-residue polypeptide: Shikimate kinase (171 aa).

14-19 (GAGKST) lines the ATP pocket. Residue S18 participates in Mg(2+) binding. Substrate contacts are provided by D36, R60, and G82. R120 lines the ATP pocket. Substrate is bound at residue R139. Residue Q156 participates in ATP binding.

This sequence belongs to the shikimate kinase family. As to quaternary structure, monomer. Requires Mg(2+) as cofactor.

It is found in the cytoplasm. It carries out the reaction shikimate + ATP = 3-phosphoshikimate + ADP + H(+). Its pathway is metabolic intermediate biosynthesis; chorismate biosynthesis; chorismate from D-erythrose 4-phosphate and phosphoenolpyruvate: step 5/7. Its function is as follows. Catalyzes the specific phosphorylation of the 3-hydroxyl group of shikimic acid using ATP as a cosubstrate. In Shewanella sediminis (strain HAW-EB3), this protein is Shikimate kinase.